A 63-amino-acid chain; its full sequence is Large ribosomal subunit protein uL30 (63 aa).

The protein belongs to the universal ribosomal protein uL30 family. Part of the 50S ribosomal subunit.

This Rickettsia akari (strain Hartford) protein is Large ribosomal subunit protein uL30.